We begin with the raw amino-acid sequence, 166 residues long: Dynein regulatory complex protein 8 (166 aa).

The EF-hand domain occupies 95–130 (DDYHTLLRAFRAFDPDGRGFIDAESFKSLLTGKGEA).

The protein belongs to the DRC8 family. In terms of assembly, component of the nexin-dynein regulatory complex (N-DRC).

The protein localises to the cytoplasm. It localises to the cytoskeleton. Its subcellular location is the flagellum axoneme. Component of the nexin-dynein regulatory complex (N-DRC), a key regulator of ciliary/flagellar motility which maintains the alignment and integrity of the distal axoneme and regulates microtubule sliding in motile axonemes. The polypeptide is Dynein regulatory complex protein 8 (Chlamydomonas reinhardtii (Chlamydomonas smithii)).